Reading from the N-terminus, the 563-residue chain is Pyruvate decarboxylase isozyme 2 (563 aa).

Pyruvate is bound by residues D28, H115, Y157, and R224. Thiamine diphosphate is bound by residues T390 and 413–415 (GSI). A Mg(2+)-binding site is contributed by D444. Residues 445–446 (GS) and 471–476 (NNGYTI) each bind thiamine diphosphate. Mg(2+) contacts are provided by N471 and G473. Residue E477 participates in pyruvate binding.

Belongs to the TPP enzyme family. Homotetramer. Requires Mg(2+) as cofactor. It depends on thiamine diphosphate as a cofactor.

The protein resides in the cytoplasm. Its subcellular location is the nucleus. The catalysed reaction is pyruvate + H(+) = acetaldehyde + CO2. It carries out the reaction 3-methyl-2-oxobutanoate + H(+) = 2-methylpropanal + CO2. The enzyme catalyses (S)-3-methyl-2-oxopentanoate + H(+) = 2-methylbutanal + CO2. It catalyses the reaction indole-3-pyruvate + H(+) = indole-3-acetaldehyde + CO2. The catalysed reaction is 3-phenylpyruvate + H(+) = 2-phenylacetaldehyde + CO2. It carries out the reaction 2-oxobutanoate + H(+) = propanal + CO2. The enzyme catalyses 2-oxopentanoate + H(+) = butanal + CO2. It catalyses the reaction 2 acetaldehyde = acetoin. The catalysed reaction is acetaldehyde + pyruvate + H(+) = acetoin + CO2. It participates in fermentation; ethanol fermentation. It functions in the pathway amino-acid degradation; Ehrlich pathway. Allosterically activated by its substrate, pyruvate. Second most abundant of three pyruvate decarboxylases (PDC1, PDC5, PDC6) implicated in the nonoxidative conversion of pyruvate to acetaldehyde and carbon dioxide during alcoholic fermentation. Most of the produced acetaldehyde is subsequently reduced to ethanol, but some is required for cytosolic acetyl-CoA production for biosynthetic pathways. The enzyme is also one of five 2-oxo acid decarboxylases (PDC1, PDC5, PDC6, ARO10, and THI3) able to decarboxylate more complex 2-oxo acids (alpha-keto-acids) than pyruvate, which seem mainly involved in amino acid catabolism. Here the enzyme catalyzes the decarboxylation of amino acids, which, in a first step, have been transaminated to the corresponding 2-oxo acids. In a third step, the resulting aldehydes are reduced to alcohols, collectively referred to as fusel oils or alcohols. Its preferred substrates are the transaminated amino acids derived from threonine (2-oxobutanoate), norvaline (2-oxopentanoate), valine (3-methyl-2-oxobutanoate, also alpha-keto-isovalerate), isoleucine ((3S)-3-methyl-2-oxopentanoate, also alpha-keto-beta-methylvalerate), phenylalanine (phenylpyruvate), and tryptophan (3-(indol-3-yl)pyruvate), whereas transaminated leucine is no substrate. In a side-reaction the carbanionic intermediate (or active aldehyde) generated by decarboxylation or by activation of an aldehyde can react with an aldehyde via condensation (or carboligation) yielding a 2-hydroxy ketone, collectively called acyloins. The sequence is that of Pyruvate decarboxylase isozyme 2 (PDC5) from Saccharomyces cerevisiae (strain ATCC 204508 / S288c) (Baker's yeast).